The chain runs to 86 residues: Dynein light chain 1, cytoplasmic (86 aa).

Belongs to the dynein light chain family. As to quaternary structure, homodimer. Cytoplasmic dynein consists of two catalytic heavy chains (HCs) and a number of non-catalytic subunits which present intermediate chains (ICs), light intermediate chains (LICs) and light chains (LCs). Component of the nuclear pore complex (NPC). NPC constitutes the exclusive means of nucleocytoplasmic transport. NPCs allow the passive diffusion of ions and small molecules and the active, nuclear transport receptor-mediated bidirectional transport of macromolecules such as proteins, RNAs, ribonucleoparticles (RNPs), and ribosomal subunits across the nuclear envelope. Due to its 8-fold rotational symmetry, all subunits are present with 8 copies or multiples thereof.

The protein resides in the cytoplasm. It is found in the cytoskeleton. Its subcellular location is the nucleus. It localises to the nuclear pore complex. Functionally, acts as one of several non-catalytic accessory components of the cytoplasmic dynein complex that are thought to be involved in linking dynein to cargos and to adapter proteins that regulate dynein function. Cytoplasmic dynein 1 acts as a motor for the intracellular retrograde motility of vesicles and organelles along microtubules. May play a role in changing or maintaining the spatial distribution of cytoskeletal structures. Also a component of the nuclear pore complex. The sequence is that of Dynein light chain 1, cytoplasmic (DYN2) from Candida glabrata (strain ATCC 2001 / BCRC 20586 / JCM 3761 / NBRC 0622 / NRRL Y-65 / CBS 138) (Yeast).